Reading from the N-terminus, the 336-residue chain is Inactive serine/threonine-protein kinase BKN2 (336 aa).

The interval 1–25 (MGNCLKPLKEQPPSASPKPLTIPSS) is disordered. The N-myristoyl glycine moiety is linked to residue Gly2. A lipid anchor (S-palmitoyl cysteine) is attached at Cys4. The 281-residue stretch at 52 to 332 (YMVIKGNDNG…QVFDGLNDIA (281 aa)) folds into the Protein kinase domain.

It belongs to the protein kinase superfamily. Ser/Thr protein kinase family. In terms of assembly, component of an immune signaling complex made of, at least, SZE1, BKN2/SZE2, ZAR1 and ZED1. Interacts directly with ZAR1 and Pseudomonas syringae HOPZ1A at the plasma membrane. In terms of processing, N-terminal myristoylation is critical for plasma membrane localization and implication in defense responses. Expressed in stigma and ovaries in flowers, and in stems and seedlings.

The protein resides in the cell membrane. Together with SZE1 and ZED1, required for effector-triggered immunity (e.g. Pseudomonas syringae type III effector HopZ1a) via the activation of ZAR1, thus being essential for resistance against P. syringae pv. tomato DC3000 expressing HopZ1a. Collaboratively with BKN1, involved in compatible pollen-stigma interactions. The polypeptide is Inactive serine/threonine-protein kinase BKN2 (Arabidopsis thaliana (Mouse-ear cress)).